The sequence spans 905 residues: Dopamine D2-like receptor (905 aa).

Positions 1–23 (MLSPFDWRRGISSSGTGGTMAAQ) are disordered. Residues 1–377 (MLSPFDWRRG…GELRVVDHNY (377 aa)) lie on the Extracellular side of the membrane. Asparagine 88, asparagine 146, asparagine 156, asparagine 166, asparagine 174, asparagine 257, asparagine 314, and asparagine 343 each carry an N-linked (GlcNAc...) asparagine glycan. A helical membrane pass occupies residues 378-398 (WALILILFPILTLFGNILVIL). Residues 399–416 (SVCRERSLQTVTNYFIVS) lie on the Cytoplasmic side of the membrane. A helical membrane pass occupies residues 417–437 (LAIADLLVAVVVMPFAVYFLV). At 438–450 (NGAWALPDVVCDF) the chain is on the extracellular side. A disulfide bond links cysteine 448 and cysteine 525. Residues 451 to 471 (YIAMDVICSTSSIFNLVAISI) form a helical membrane-spanning segment. The Cytoplasmic portion of the chain corresponds to 472–493 (DRYIAVTQPIKYAKHKNSRRVC). A helical membrane pass occupies residues 494-514 (LTILLVWAISAAIGSPIVLGL). At 515–531 (NNTPNREPDVCAFYNAD) the chain is on the extracellular side. The chain crosses the membrane as a helical span at residues 532–552 (FILYSSLSSFYIPCIIMVFLY). Over 553 to 830 (WNIFKALRSR…AKKERKATKT (278 aa)) the chain is Cytoplasmic. Disordered regions lie at residues 600-631 (SRHA…ISPD), 702-753 (ATSA…SVGV), and 780-799 (DSTL…KNSQ). Low complexity predominate over residues 702-722 (ATSAAPRSSGSPPDSPLPSGA). Residues 723 to 734 (TLQRSSVSSQRR) are compositionally biased toward polar residues. The span at 735-746 (PTGDDSPKRGEP) shows a compositional bias: basic and acidic residues. A helical membrane pass occupies residues 831-851 (LAIVLGVFLFCWLPFFSCNIM). Over 852 to 869 (DAMCAKFKKDCRPGLTAY) the chain is Extracellular. Residues 870-890 (MMTTWLGYINSFVNPVIYTIF) traverse the membrane as a helical segment. Residues 891-905 (NPEFRKAFKKIMHMG) lie on the Cytoplasmic side of the membrane.

Belongs to the G-protein coupled receptor 1 family. In terms of tissue distribution, highest expression is in adult heads.

The protein localises to the cell membrane. Functionally, receptor for dopamine. The activity of this receptor is mediated by G proteins which inhibit adenylyl cyclase. The chain is Dopamine D2-like receptor from Drosophila melanogaster (Fruit fly).